Consider the following 492-residue polypeptide: Stage IV sporulation protein A (492 aa).

Positions 24-31 (GAVRTGKS) match the Walker A motif; involved in ATP-binding motif. 24–31 (GAVRTGKS) provides a ligand contact to ATP.

It localises to the cytoplasm. The enzyme catalyses ATP + H2O = ADP + phosphate + H(+). Functionally, ATPase. Has a role at an early stage in the morphogenesis of the spore coat outer layers. Directs the assembly of the coat and exosporium to an area around the forespore. The sequence is that of Stage IV sporulation protein A from Bacillus anthracis.